A 1155-amino-acid polypeptide reads, in one-letter code: Eukaryotic translation initiation factor 3 subunit A (1155 aa).

Residues 319-502 (LQRMAAHVLL…NSIYFGTDLT (184 aa)) form the PCI domain. Disordered regions lie at residues 589 to 613 (QNNA…LAEQ) and 836 to 1155 (AAEA…VKRR). Composition is skewed to basic and acidic residues over residues 836 to 900 (AAEA…RGGD), 925 to 987 (DRNE…EPDS), 1004 to 1057 (SRDD…DAAP), and 1066 to 1101 (DAPR…RAPK). Residues 1104–1118 (GPSGGTGTAASGGGN) are compositionally biased toward gly residues. Over residues 1125–1145 (PRDEPAPKRDQPQDKENKAVD) the composition is skewed to basic and acidic residues.

It belongs to the eIF-3 subunit A family. In terms of assembly, component of the eukaryotic translation initiation factor 3 (eIF-3) complex. The eIF-3 complex interacts with pix.

It localises to the cytoplasm. RNA-binding component of the eukaryotic translation initiation factor 3 (eIF-3) complex, which is involved in protein synthesis of a specialized repertoire of mRNAs and, together with other initiation factors, stimulates binding of mRNA and methionyl-tRNAi to the 40S ribosome. The eIF-3 complex specifically targets and initiates translation of a subset of mRNAs involved in cell proliferation. The polypeptide is Eukaryotic translation initiation factor 3 subunit A (Drosophila pseudoobscura pseudoobscura (Fruit fly)).